The chain runs to 199 residues: Recombination protein RecR (199 aa).

The C4-type zinc-finger motif lies at 58-73 (CSVCTNLTDRDPCRIC). One can recognise a Toprim domain in the interval 81-176 (AVICVVEEPR…KVTRIAHGLP (96 aa)).

Belongs to the RecR family.

Functionally, may play a role in DNA repair. It seems to be involved in an RecBC-independent recombinational process of DNA repair. It may act with RecF and RecO. In Heliobacterium modesticaldum (strain ATCC 51547 / Ice1), this protein is Recombination protein RecR.